The following is a 175-amino-acid chain: Hypoxanthine-guanine phosphoribosyltransferase (175 aa).

Lys-40 and Gly-41 together coordinate diphosphate. 2 residues coordinate Mg(2+): Glu-96 and Asp-97. Asp-100 acts as the Proton acceptor in catalysis. GMP contacts are provided by residues Lys-128, 149-150 (FL), and Asp-156. Residue Arg-162 coordinates diphosphate.

Belongs to the purine/pyrimidine phosphoribosyltransferase family. Mg(2+) is required as a cofactor.

It localises to the cytoplasm. It carries out the reaction IMP + diphosphate = hypoxanthine + 5-phospho-alpha-D-ribose 1-diphosphate. The catalysed reaction is GMP + diphosphate = guanine + 5-phospho-alpha-D-ribose 1-diphosphate. The protein operates within purine metabolism; IMP biosynthesis via salvage pathway; IMP from hypoxanthine: step 1/1. Its pathway is purine metabolism; GMP biosynthesis via salvage pathway; GMP from guanine: step 1/1. Purine salvage pathway enzyme that catalyzes the transfer of the ribosyl-5-phosphate group from 5-phospho-alpha-D-ribose 1-diphosphate (PRPP) to the N9 position of the 6-oxopurines hypoxanthine and guanine to form the corresponding ribonucleotides IMP (inosine 5'-monophosphate) and GMP (guanosine 5'-monophosphate), with the release of PPi. In Mycoplasma genitalium (strain ATCC 33530 / DSM 19775 / NCTC 10195 / G37) (Mycoplasmoides genitalium), this protein is Hypoxanthine-guanine phosphoribosyltransferase (hpt).